The following is a 438-amino-acid chain: MNKTPRVGFVSLGCPKAASDSEQILTRLRAEGYEIAPSYDGADLVVVNTCGFIDSAVEESLDAIGEALNENGKVIVTGCLGAKGDVVRDVHPSVLAVTGPHATEEVMSAVHTHLPKPHDPFVDLVPDIGVRLTPKHYAYLKISEGCNHRCTFCIIPSMRGDLESRPIHDVLREAESLAKAGVKEILVISQDTSAYGVDTKYKLGFHNGRPVKTRMTELCEELGRHGIWVRLHYVYPYPHVDEVIPLMRDGKILPYLDIPFQHASQKVLKLMKRPANSDNVLARIKKWREICPELVIRSTFIVGFPGETEEDFEELLAFIREAELDRVGCFTYSPVEGATANELPNPVPEDVKEARKERFMAVQAEISARRLERRVGQTLQVLVDEIDDEGTAVCRSYADAPEIDGLVFVEDAAGMQPGEFYQVEIVDCSEHDLWGERR.

The MTTase N-terminal domain maps to 5–115 (PRVGFVSLGC…VMSAVHTHLP (111 aa)). [4Fe-4S] cluster-binding residues include cysteine 14, cysteine 50, cysteine 79, cysteine 146, cysteine 150, and cysteine 153. The Radical SAM core domain maps to 132–369 (LTPKHYAYLK…MAVQAEISAR (238 aa)). Residues 372 to 438 (ERRVGQTLQV…SEHDLWGERR (67 aa)) enclose the TRAM domain.

This sequence belongs to the methylthiotransferase family. RimO subfamily. [4Fe-4S] cluster serves as cofactor.

Its subcellular location is the cytoplasm. It catalyses the reaction L-aspartate(89)-[ribosomal protein uS12]-hydrogen + (sulfur carrier)-SH + AH2 + 2 S-adenosyl-L-methionine = 3-methylsulfanyl-L-aspartate(89)-[ribosomal protein uS12]-hydrogen + (sulfur carrier)-H + 5'-deoxyadenosine + L-methionine + A + S-adenosyl-L-homocysteine + 2 H(+). Its function is as follows. Catalyzes the methylthiolation of an aspartic acid residue of ribosomal protein uS12. This Chromobacterium violaceum (strain ATCC 12472 / DSM 30191 / JCM 1249 / CCUG 213 / NBRC 12614 / NCIMB 9131 / NCTC 9757 / MK) protein is Ribosomal protein uS12 methylthiotransferase RimO.